Here is a 560-residue protein sequence, read N- to C-terminus: MSTHNEYDYIIIGAGSAGNVLATRLTEDADVSVLLLEAGGPDYRLDFRTQMPAALAFPLQGKRYNWAYKTDPEPFMNNRRMDCGRGKGLGGSSLINGMCYIRGNAMDYDNWASMPGLEDWTYLDCLPYFRKAETRDIGPNDYHGGDGPLRVTTPKAGNNELFAAMVEAGVQAGYPRTDDLNGYQQEGFGPMDRTVTPKGRRSSTARGYLDLAKPRPNLTIVTHALTDRILFSGKRAVGVQWLRNDQPQRATARREVLLCGGAIASPQILQRSGVGPADLLRSLDIDLVHHLPGVGANLQDHLEMYLQYECKKPVSLAPALKLYNQPAIGAEWLFLGTGIGASNQFEAGGFIRSDAEFDWPNLQYHFLPVAINYNGSNPIKAHSFQMHVGSMRSPSRGRIHVRSKDPREHPSILFNYMSHEQDWREFRAAIRITREIFAQPALAPYSGREISPGSALQTDAQIDAFVREHAETAYHPSCSNKMGHADDPMAVVDGQGRVHGLEGLRIVDASIMPQVVTGNLNAPTIMMAEKLADVIRGRTPLARSTAPYYKANGAPVRKQD.

8 to 37 (DYIIIGAGSAGNVLATRLTEDADVSVLLLE) provides a ligand contact to FAD. The Proton acceptor role is filled by H475.

It belongs to the GMC oxidoreductase family. The cofactor is FAD.

The catalysed reaction is choline + A = betaine aldehyde + AH2. It catalyses the reaction betaine aldehyde + NAD(+) + H2O = glycine betaine + NADH + 2 H(+). It functions in the pathway amine and polyamine biosynthesis; betaine biosynthesis via choline pathway; betaine aldehyde from choline (cytochrome c reductase route): step 1/1. Its function is as follows. Involved in the biosynthesis of the osmoprotectant glycine betaine. Catalyzes the oxidation of choline to betaine aldehyde and betaine aldehyde to glycine betaine at the same rate. The polypeptide is Oxygen-dependent choline dehydrogenase (Stenotrophomonas maltophilia (strain K279a)).